Here is a 336-residue protein sequence, read N- to C-terminus: 3-isopropylmalate dehydrogenase (336 aa).

Substrate-binding residues include Arg87, Arg97, Arg121, and Asp211. Asp211, Asp235, and Asp239 together coordinate Mg(2+). 271-283 (GSAPDIAGQGIAD) contributes to the NAD(+) binding site.

Belongs to the isocitrate and isopropylmalate dehydrogenases family. LeuB type 2 subfamily. As to quaternary structure, homodimer. Mg(2+) is required as a cofactor. Requires Mn(2+) as cofactor.

Its subcellular location is the cytoplasm. The catalysed reaction is (2R,3S)-3-isopropylmalate + NAD(+) = 4-methyl-2-oxopentanoate + CO2 + NADH. It participates in amino-acid biosynthesis; L-leucine biosynthesis; L-leucine from 3-methyl-2-oxobutanoate: step 3/4. Functionally, catalyzes the oxidation of 3-carboxy-2-hydroxy-4-methylpentanoate (3-isopropylmalate) to 3-carboxy-4-methyl-2-oxopentanoate. The product decarboxylates to 4-methyl-2 oxopentanoate. In Mycolicibacterium gilvum (strain PYR-GCK) (Mycobacterium gilvum (strain PYR-GCK)), this protein is 3-isopropylmalate dehydrogenase.